The following is a 465-amino-acid chain: Ribulose bisphosphate carboxylase large chain (465 aa).

N6,N6,N6-trimethyllysine is present on Lys-4. 2 residues coordinate substrate: Asn-113 and Thr-163. Lys-165 serves as the catalytic Proton acceptor. Residue Lys-167 participates in substrate binding. 3 residues coordinate Mg(2+): Lys-191, Asp-193, and Glu-194. The residue at position 191 (Lys-191) is an N6-carboxylysine. His-284 acts as the Proton acceptor in catalysis. 3 residues coordinate substrate: Arg-285, His-317, and Ser-369.

This sequence belongs to the RuBisCO large chain family. Type I subfamily. As to quaternary structure, heterohexadecamer of 8 large chains and 8 small chains; disulfide-linked. The disulfide link is formed within the large subunit homodimers. Mg(2+) is required as a cofactor. In terms of processing, the disulfide bond which can form in the large chain dimeric partners within the hexadecamer appears to be associated with oxidative stress and protein turnover.

The protein localises to the plastid. It localises to the chloroplast. The catalysed reaction is 2 (2R)-3-phosphoglycerate + 2 H(+) = D-ribulose 1,5-bisphosphate + CO2 + H2O. It catalyses the reaction D-ribulose 1,5-bisphosphate + O2 = 2-phosphoglycolate + (2R)-3-phosphoglycerate + 2 H(+). Its function is as follows. RuBisCO catalyzes two reactions: the carboxylation of D-ribulose 1,5-bisphosphate, the primary event in carbon dioxide fixation, as well as the oxidative fragmentation of the pentose substrate in the photorespiration process. Both reactions occur simultaneously and in competition at the same active site. This is Ribulose bisphosphate carboxylase large chain from Bauera rubioides (Dog rose).